The sequence spans 437 residues: Protein farnesyltransferase subunit beta (437 aa).

5 PFTB repeats span residues Ala-123–Gly-164, Arg-174–Asn-215, Phe-222–Lys-263, Leu-270–His-312, and Gln-332–Gln-374. Residues His-248–Tyr-251 and Arg-291–Lys-294 each bind (2E,6E)-farnesyl diphosphate. Positions 297 and 299 each coordinate Zn(2+). A (2E,6E)-farnesyl diphosphate-binding site is contributed by Tyr-300 to Trp-303. Position 362 (His-362) interacts with Zn(2+). Residue Thr-436 is modified to Phosphothreonine.

This sequence belongs to the protein prenyltransferase subunit beta family. As to quaternary structure, heterodimer of FNTA and FNTB. The cofactor is Zn(2+).

It catalyses the reaction L-cysteinyl-[protein] + (2E,6E)-farnesyl diphosphate = S-(2E,6E)-farnesyl-L-cysteinyl-[protein] + diphosphate. Essential subunit of the farnesyltransferase complex. Catalyzes the transfer of a farnesyl moiety from farnesyl diphosphate to a cysteine at the fourth position from the C-terminus of several proteins having the C-terminal sequence Cys-aliphatic-aliphatic-X. The protein is Protein farnesyltransferase subunit beta (FNTB) of Bos taurus (Bovine).